The sequence spans 365 residues: 7-methylxanthine methyltransferase PCS1 (365 aa).

Residue Tyr19 participates in S-adenosyl-L-homocysteine binding. Residue Thr26 coordinates caffeine. The S-adenosyl-L-homocysteine site is built by Cys62, Asn67, Asp99, Leu100, Ser134, and Phe135. Residues Tyr152, His155, and Trp156 each coordinate caffeine. Residue Asn173 participates in Mg(2+) binding. Position 221 (His221) interacts with caffeine. Positions 259, 261, and 262 each coordinate Mg(2+). Caffeine is bound at residue Phe317.

The protein belongs to the methyltransferase superfamily. Type-7 methyltransferase family. Requires Mg(2+) as cofactor.

It catalyses the reaction 1,7-dimethylxanthine + S-adenosyl-L-methionine = caffeine + S-adenosyl-L-homocysteine + H(+). It carries out the reaction 7-methylxanthine + S-adenosyl-L-methionine = theobromine + S-adenosyl-L-homocysteine + H(+). The protein operates within alkaloid biosynthesis. Involved in the biosynthesis of caffeine. Catalyzes the conversion of 7-methylxanthine (7mX) to theobromine, and, to some extent, the conversion of paraxanthine to caffeine, but seems not able to convert theobromine to caffeine. This is 7-methylxanthine methyltransferase PCS1 from Camellia ptilophylla (Cocoa tea).